A 516-amino-acid chain; its full sequence is Histidine ammonia-lyase 1 (516 aa).

Residues 147–149 constitute a cross-link (5-imidazolinone (Ser-Gly)); that stretch reads SSG. Ser-148 carries the 2,3-didehydroalanine (Ser) modification.

This sequence belongs to the PAL/histidase family. Contains an active site 4-methylidene-imidazol-5-one (MIO), which is formed autocatalytically by cyclization and dehydration of residues Ser-Ser-Gly.

It is found in the cytoplasm. It catalyses the reaction L-histidine = trans-urocanate + NH4(+). The protein operates within amino-acid degradation; L-histidine degradation into L-glutamate; N-formimidoyl-L-glutamate from L-histidine: step 1/3. This Fusobacterium nucleatum subsp. nucleatum (strain ATCC 25586 / DSM 15643 / BCRC 10681 / CIP 101130 / JCM 8532 / KCTC 2640 / LMG 13131 / VPI 4355) protein is Histidine ammonia-lyase 1 (hutH1).